We begin with the raw amino-acid sequence, 565 residues long: CTP synthase (565 aa).

The segment at 1 to 272 (MARPKNVKHI…DLRVMKKLGL (272 aa)) is amidoligase domain. S18 contributes to the CTP binding site. UTP is bound at residue S18. Position 19-24 (19-24 (SLGKGI)) interacts with ATP. Residue Y59 coordinates L-glutamine. D76 lines the ATP pocket. Residues D76 and E146 each coordinate Mg(2+). CTP is bound by residues 153–155 (DIE), 193–198 (KTKPTQ), and K229. UTP contacts are provided by residues 193-198 (KTKPTQ) and K229. One can recognise a Glutamine amidotransferase type-1 domain in the interval 299 to 543 (TIGVCGKYTE…VQAAKEFAMG (245 aa)). L-glutamine is bound at residue G363. Residue C390 is the Nucleophile; for glutamine hydrolysis of the active site. L-glutamine is bound by residues 391-394 (LGMQ), E414, and R471. Active-site residues include H516 and E518.

Belongs to the CTP synthase family. In terms of assembly, homotetramer.

It catalyses the reaction UTP + L-glutamine + ATP + H2O = CTP + L-glutamate + ADP + phosphate + 2 H(+). The catalysed reaction is L-glutamine + H2O = L-glutamate + NH4(+). It carries out the reaction UTP + NH4(+) + ATP = CTP + ADP + phosphate + 2 H(+). It participates in pyrimidine metabolism; CTP biosynthesis via de novo pathway; CTP from UDP: step 2/2. Allosterically activated by GTP, when glutamine is the substrate; GTP has no effect on the reaction when ammonia is the substrate. The allosteric effector GTP functions by stabilizing the protein conformation that binds the tetrahedral intermediate(s) formed during glutamine hydrolysis. Inhibited by the product CTP, via allosteric rather than competitive inhibition. Its function is as follows. Catalyzes the ATP-dependent amination of UTP to CTP with either L-glutamine or ammonia as the source of nitrogen. Regulates intracellular CTP levels through interactions with the four ribonucleotide triphosphates. The chain is CTP synthase from Chlorobaculum parvum (strain DSM 263 / NCIMB 8327) (Chlorobium vibrioforme subsp. thiosulfatophilum).